The chain runs to 321 residues: Putative membrane-bound redox modulator Alx (321 aa).

At 1-6 the chain is on the periplasmic side; the sequence is MNTVGT. A helical transmembrane segment spans residues 7–27; sequence PLLWGGFAVVVAIMLAIDLLL. Over 28–43 the chain is Cytoplasmic; it reads QGRRGAHAMTMKQAAA. Residues 44–64 form a helical membrane-spanning segment; the sequence is WSLVWVTLSLLFNAAFWWYLV. The Periplasmic portion of the chain corresponds to 65–89; it reads QTEGRAVADPQALAFLTGYLIEKSL. Residues 90–110 traverse the membrane as a helical segment; sequence AVDNVFVWLMLFSYFSVPAAL. Topologically, residues 111–113 are cytoplasmic; sequence QRR. The helical transmembrane segment at 114-134 threads the bilayer; sequence VLVYGVLGAIVLRTIMIFTGS. A topological domain (periplasmic) is located at residue Trp-135. Residues 136 to 156 traverse the membrane as a helical segment; that stretch reads LISQFDWILYIFGAFLLFTGV. At 157–198 the chain is on the cytoplasmic side; it reads KMALAHEDESGIGDKPLVRWLRGHLRMTDTIDNEHFFVRKNG. A helical membrane pass occupies residues 199 to 219; that stretch reads LLYATPLMLVLILVELSDVIF. Topologically, residues 220-225 are periplasmic; the sequence is AVDSIP. Residues 226–246 traverse the membrane as a helical segment; it reads AIFAVTTDPFIVLTSNLFAIL. At 247 to 261 the chain is on the cytoplasmic side; it reads GLRAMYFLLAGVAER. The helical transmembrane segment at 262 to 282 threads the bilayer; it reads FSMLKYGLAVILVFIGIKMLI. Residues 283–286 are Periplasmic-facing; the sequence is VDFY. A helical membrane pass occupies residues 287–307; the sequence is HIPIAVSLGVVFGILVMTFII. The Cytoplasmic segment spans residues 308–321; that stretch reads NAWVNYRHDKQRVG.

The protein belongs to the TerC family.

It is found in the cell inner membrane. Has been proposed to be a redox modulator. The polypeptide is Putative membrane-bound redox modulator Alx (alx) (Escherichia coli O157:H7).